The chain runs to 139 residues: MKKGVLLNADISAVISRLGHTDQIVIGDAGLPIPATTTRIDLALTRGVPGFLQVVDVVTQEMQVENAYLAEEIVKNNPQLHEALLVLLTQLEQRQENQIALRYISHEAFKEQTKQSRAVIRSGECSPFANIILGSGVTF.

Residue histidine 20 is the Proton donor of the active site. Residues aspartate 28, histidine 106, and 128–130 (FAN) contribute to the substrate site.

It belongs to the RbsD / FucU family. RbsD subfamily. In terms of assembly, homodecamer.

Its subcellular location is the cytoplasm. The enzyme catalyses beta-D-ribopyranose = beta-D-ribofuranose. It participates in carbohydrate metabolism; D-ribose degradation; D-ribose 5-phosphate from beta-D-ribopyranose: step 1/2. Catalyzes the interconversion of beta-pyran and beta-furan forms of D-ribose. The polypeptide is D-ribose pyranase (Yersinia pseudotuberculosis serotype O:1b (strain IP 31758)).